Here is a 194-residue protein sequence, read N- to C-terminus: Exopolysaccharide II synthesis transcriptional activator ExpG (194 aa).

Residues Tyr-49–Leu-184 enclose the HTH marR-type domain.

Functionally, transcriptional activator of genes for galactoglucan synthesis (exopolysaccharide II or EPS II). In Rhizobium meliloti (strain 1021) (Ensifer meliloti), this protein is Exopolysaccharide II synthesis transcriptional activator ExpG (expG).